The sequence spans 477 residues: Ribulose bisphosphate carboxylase large chain (477 aa).

A propeptide spanning residues 1-2 (MS) is cleaved from the precursor. Position 3 is an N-acetylproline (proline 3). An N6,N6,N6-trimethyllysine modification is found at lysine 14. Substrate-binding residues include asparagine 123 and threonine 173. The active-site Proton acceptor is lysine 175. Lysine 177 is a binding site for substrate. The Mg(2+) site is built by lysine 201, aspartate 203, and glutamate 204. Lysine 201 is modified (N6-carboxylysine). The active-site Proton acceptor is histidine 294. Substrate-binding residues include arginine 295, histidine 327, and serine 379.

This sequence belongs to the RuBisCO large chain family. Type I subfamily. Heterohexadecamer of 8 large chains and 8 small chains; disulfide-linked. The disulfide link is formed within the large subunit homodimers. Mg(2+) is required as a cofactor. In terms of processing, the disulfide bond which can form in the large chain dimeric partners within the hexadecamer appears to be associated with oxidative stress and protein turnover.

The protein resides in the plastid. Its subcellular location is the chloroplast. It catalyses the reaction 2 (2R)-3-phosphoglycerate + 2 H(+) = D-ribulose 1,5-bisphosphate + CO2 + H2O. It carries out the reaction D-ribulose 1,5-bisphosphate + O2 = 2-phosphoglycolate + (2R)-3-phosphoglycerate + 2 H(+). Functionally, ruBisCO catalyzes two reactions: the carboxylation of D-ribulose 1,5-bisphosphate, the primary event in carbon dioxide fixation, as well as the oxidative fragmentation of the pentose substrate in the photorespiration process. Both reactions occur simultaneously and in competition at the same active site. This chain is Ribulose bisphosphate carboxylase large chain, found in Oryza nivara (Indian wild rice).